Here is a 532-residue protein sequence, read N- to C-terminus: E3 ubiquitin-protein ligase ICP0 (532 aa).

Positions 8, 11, 24, 26, 29, 32, 43, and 46 each coordinate Zn(2+). An RING-type zinc finger spans residues Cys-8–Lys-47. Disordered regions lie at residues Glu-206–Pro-391, Ala-406–Arg-426, Glu-461–Gly-498, and Gln-510–Gln-532. Acidic residues-rich tracts occupy residues Ser-217–Val-227 and Asp-234–Ser-243. The span at Arg-286 to Pro-295 shows a compositional bias: basic residues.

Auto-ubiquitinated.

The catalysed reaction is S-ubiquitinyl-[E2 ubiquitin-conjugating enzyme]-L-cysteine + [acceptor protein]-L-lysine = [E2 ubiquitin-conjugating enzyme]-L-cysteine + N(6)-ubiquitinyl-[acceptor protein]-L-lysine.. Its function is as follows. Evades nuclear antiviral defenses triggered by dsDNA viruses. Acts during the initial stages of lytic infection and the reactivation of latent viral genome. Prevents the antiviral effect of nuclear bodies by degrading host PML and SP100. The polypeptide is E3 ubiquitin-protein ligase ICP0 (63) (Equus caballus (Horse)).